A 306-amino-acid chain; its full sequence is Solute carrier family 25 member 48 (306 aa).

Solcar repeat units follow at residues 3 to 86 (SFQL…TQRF), 101 to 200 (RSLS…LSEW), and 209 to 296 (PSPY…SLKA). A run of 6 helical transmembrane segments spans residues 9 to 29 (FVAG…LDTV), 61 to 81 (GMSF…GVFS), 107 to 127 (LLAS…VELI), 184 to 204 (IPGY…ITPE), 212 to 232 (YAAW…ATPM), and 272 to 290 (ITVN…FLGY).

It belongs to the mitochondrial carrier (TC 2.A.29) family.

The protein localises to the mitochondrion inner membrane. This is Solute carrier family 25 member 48 (Slc25a48) from Mus musculus (Mouse).